The following is a 433-amino-acid chain: Serine--tRNA ligase (433 aa).

235 to 237 is an L-serine binding site; sequence TSE. Residue 266–268 coordinates ATP; the sequence is RSE. Glutamate 289 is a binding site for L-serine. ATP is bound at residue 353-356; sequence EISS. Serine 388 contacts L-serine.

It belongs to the class-II aminoacyl-tRNA synthetase family. Type-1 seryl-tRNA synthetase subfamily. In terms of assembly, homodimer. The tRNA molecule binds across the dimer.

The protein resides in the cytoplasm. The catalysed reaction is tRNA(Ser) + L-serine + ATP = L-seryl-tRNA(Ser) + AMP + diphosphate + H(+). The enzyme catalyses tRNA(Sec) + L-serine + ATP = L-seryl-tRNA(Sec) + AMP + diphosphate + H(+). Its pathway is aminoacyl-tRNA biosynthesis; selenocysteinyl-tRNA(Sec) biosynthesis; L-seryl-tRNA(Sec) from L-serine and tRNA(Sec): step 1/1. Catalyzes the attachment of serine to tRNA(Ser). Is also able to aminoacylate tRNA(Sec) with serine, to form the misacylated tRNA L-seryl-tRNA(Sec), which will be further converted into selenocysteinyl-tRNA(Sec). The sequence is that of Serine--tRNA ligase from Burkholderia cenocepacia (strain HI2424).